The chain runs to 346 residues: O-methyltransferase atr3 (346 aa).

Disordered regions lie at residues 1–22 and 52–88; these read MTSVDTMPPPMVRLESQPDDLM and GLKSHPVVTTGTEKTGVMPPLQPESKKNNKGVPWYHA. S-adenosyl-L-methionine is bound by residues 190 to 191 and 217 to 218; these read DL and DI.

This sequence belongs to the class I-like SAM-binding methyltransferase superfamily. In terms of assembly, homodimer.

The enzyme catalyses 4-O-demethylbarbatate + S-adenosyl-L-methionine = proatranorin I + S-adenosyl-L-homocysteine. It participates in secondary metabolite biosynthesis; terpenoid biosynthesis. O-methyltransferase; part of the gene cluster that mediates the biosynthesis of atranorin, a depside of polyketide origin that accumulates in the cortical or medullary layers of lichen thalli. Atr3 methylates the carboxyl group of 4-O-demethylbarbatic acid to yield proatranorin I. Atr3 is also able to methylate the atr2 product proatranorin III to produce the final compound atranorin. The first step in the pathway is performed by the non-reducing polyketide synthase atr1 that produces 4-O-demethylbarbatic acid composed of two 3-methylorsellinic acid (3MOA) moieties. The pathway continues with the actions of the cytochrome P450 monooygenase atr2 that catalizes the oxidation of c-9 and the O-methyltransferase atr3 that performs the methylation of the carboxyl group to yield atranorin, via the proatranorin II and III intermediates if atr2 acts first, or the proatranorin I intermediate if atr3 acts first. The protein is O-methyltransferase atr3 of Stereocaulon alpinum (Alpine snow lichen).